A 1158-amino-acid polypeptide reads, in one-letter code: Teashirt homolog 1 (1158 aa).

3 disordered regions span residues 70–126, 170–228, and 310–341; these read DDGR…DMDT, INST…ANNG, and TGHYRDDNKDKEEDRGKKWSKPRKRSLMEMEG. The span at 76-88 shows a compositional bias: polar residues; it reads LSYQNSPLSNGTN. Low complexity-rich tracts occupy residues 186–205 and 213–228; these read SHASTIASSGASSSSNASAS and SSNSTKATTLTNANNG. 2 consecutive C2H2-type zinc fingers follow at residues 288–312 and 349–373; these read FRCKDCSAAYDTLVGLTVHMNETGH and LKCMYCGHSFESLQDLSVHMIKTKH. The segment covering 310–326 has biased composition (basic and acidic residues); that stretch reads TGHYRDDNKDKEEDRGK. A disordered region spans residues 405 to 425; it reads PCSPDSISSTPGIPLAETAPT. Residues 461–485 form a C2H2-type 3 zinc finger; sequence LKCMECGSSHDTLQQLTAHMMVTGH. Disordered stretches follow at residues 516 to 573, 656 to 681, and 693 to 748; these read PPTT…VEKS, LKSLTSDSSTLIHSPSSPSPPPNHKS, and VTGK…VDKD. Basic and acidic residues predominate over residues 555–573; it reads EEKKIKQEKEDPSERVEKS. Residues 656–671 show a composition bias toward low complexity; the sequence is LKSLTSDSSTLIHSPS. 2 stretches are compositionally biased toward basic and acidic residues: residues 693–716 and 724–748; these read VTGKIPSKKDRDEKLTERNSKHLT and LKERKDLPKPDDLTKPTKNGTVDKD. Positions 963–1033 form a DNA-binding region, homeobox; that stretch reads RKGRQSNWNP…NVKYQLRRTG (71 aa). C2H2-type zinc fingers lie at residues 1048–1070 and 1115–1138; these read FLCSDCASQFRTPSTYINHLESH and FQCKLCNRTFVSKHAVKLHLSKTH.

The protein belongs to the teashirt C2H2-type zinc-finger protein family.

The protein localises to the nucleus. Probable transcriptional regulator involved in developmental processes. May act as a transcriptional repressor (Potential). The polypeptide is Teashirt homolog 1 (tshz1) (Danio rerio (Zebrafish)).